A 213-amino-acid polypeptide reads, in one-letter code: Ribosomal RNA small subunit methyltransferase G (213 aa).

S-adenosyl-L-methionine-binding positions include glycine 55, 105 to 106, and arginine 124; that span reads AE.

The protein belongs to the methyltransferase superfamily. RNA methyltransferase RsmG family.

The protein resides in the cytoplasm. Its function is as follows. Specifically methylates the N7 position of a guanine in 16S rRNA. In Fervidobacterium nodosum (strain ATCC 35602 / DSM 5306 / Rt17-B1), this protein is Ribosomal RNA small subunit methyltransferase G.